The primary structure comprises 105 residues: Large ribosomal subunit protein P2 (105 aa).

Positions 84–105 (AEAKKEEPEEEADDDMGFGLFD) are disordered.

Belongs to the eukaryotic ribosomal protein P1/P2 family. P1 and P2 exist as dimers at the large ribosomal subunit. Post-translationally, phosphorylated.

Its function is as follows. Plays an important role in the elongation step of protein synthesis. This chain is Large ribosomal subunit protein P2 (ARP-1), found in Leishmania donovani.